The following is a 408-amino-acid chain: LL-diaminopimelate aminotransferase (408 aa).

Residues Tyr15 and Gly42 each contribute to the substrate site. Pyridoxal 5'-phosphate contacts are provided by residues Tyr72, 108-109 (SK), Tyr132, Asn187, Tyr218, and 246-248 (SFS). Residues Lys109, Tyr132, and Asn187 each coordinate substrate. Lys249 carries the post-translational modification N6-(pyridoxal phosphate)lysine. Pyridoxal 5'-phosphate is bound by residues Arg257 and Asn292. Substrate contacts are provided by Asn292 and Arg388.

It belongs to the class-I pyridoxal-phosphate-dependent aminotransferase family. LL-diaminopimelate aminotransferase subfamily. As to quaternary structure, homodimer. Pyridoxal 5'-phosphate is required as a cofactor.

The enzyme catalyses (2S,6S)-2,6-diaminopimelate + 2-oxoglutarate = (S)-2,3,4,5-tetrahydrodipicolinate + L-glutamate + H2O + H(+). The protein operates within amino-acid biosynthesis; L-lysine biosynthesis via DAP pathway; LL-2,6-diaminopimelate from (S)-tetrahydrodipicolinate (aminotransferase route): step 1/1. In terms of biological role, involved in the synthesis of meso-diaminopimelate (m-DAP or DL-DAP), required for both lysine and peptidoglycan biosynthesis. Catalyzes the direct conversion of tetrahydrodipicolinate to LL-diaminopimelate. The protein is LL-diaminopimelate aminotransferase of Prochlorococcus marinus (strain SARG / CCMP1375 / SS120).